Reading from the N-terminus, the 197-residue chain is dCTP deaminase, dUMP-forming (197 aa).

Residues 105-110, D123, 131-133, Q152, Y166, K174, and Q178 each bind dCTP; these read RSSIGR and TLE. E133 serves as the catalytic Proton donor/acceptor. Residues 161–183 form a disordered region; sequence PAERPYGHPSRDSKYIGQTRPQT. Residues 165–174 are compositionally biased toward basic and acidic residues; that stretch reads PYGHPSRDSK.

Belongs to the dCTP deaminase family. Homotrimer.

The catalysed reaction is dCTP + 2 H2O = dUMP + NH4(+) + diphosphate. It functions in the pathway pyrimidine metabolism; dUMP biosynthesis; dUMP from dCTP: step 1/1. In terms of biological role, bifunctional enzyme that catalyzes both the deamination of dCTP to dUTP and the hydrolysis of dUTP to dUMP without releasing the toxic dUTP intermediate. The polypeptide is dCTP deaminase, dUMP-forming (Methanothermobacter thermautotrophicus (strain ATCC 29096 / DSM 1053 / JCM 10044 / NBRC 100330 / Delta H) (Methanobacterium thermoautotrophicum)).